The sequence spans 322 residues: Ribose-phosphate pyrophosphokinase (322 aa).

ATP contacts are provided by residues 43-45 and 102-103; these read DGE and RQ. Residues H137 and D177 each contribute to the Mg(2+) site. The active site involves K201. Residues R203, D227, and 231-235 contribute to the D-ribose 5-phosphate site; that span reads DTAGT.

It belongs to the ribose-phosphate pyrophosphokinase family. Class I subfamily. As to quaternary structure, homohexamer. The cofactor is Mg(2+).

The protein resides in the cytoplasm. It catalyses the reaction D-ribose 5-phosphate + ATP = 5-phospho-alpha-D-ribose 1-diphosphate + AMP + H(+). The protein operates within metabolic intermediate biosynthesis; 5-phospho-alpha-D-ribose 1-diphosphate biosynthesis; 5-phospho-alpha-D-ribose 1-diphosphate from D-ribose 5-phosphate (route I): step 1/1. Functionally, involved in the biosynthesis of the central metabolite phospho-alpha-D-ribosyl-1-pyrophosphate (PRPP) via the transfer of pyrophosphoryl group from ATP to 1-hydroxyl of ribose-5-phosphate (Rib-5-P). This chain is Ribose-phosphate pyrophosphokinase, found in Xylella fastidiosa (strain 9a5c).